We begin with the raw amino-acid sequence, 87 residues long: Homeotic protein ultrabithorax (87 aa).

The Antp-type hexapeptide motif lies at 22 to 27 (FYPWMA).

Belongs to the Antp homeobox family. In terms of tissue distribution, in the embryo, expression is seen in the epidermis, somatic and visceral mesoderm, and the peripheral and central nervous system.

It is found in the nucleus. In terms of biological role, sequence-specific transcription factor which is part of a developmental regulatory system that provides cells with specific positional identities on the anterior-posterior axis. Binds the consensus region 5'-TTAAT[GT][GA]-3'. This homeotic protein controls development of the cells in the posterior thoracic and first abdominal segments. It activates the synthesis of the decapentaplegic (DPP) growth factor. In Drosophila virilis (Fruit fly), this protein is Homeotic protein ultrabithorax (Ubx).